Here is a 146-residue protein sequence, read N- to C-terminus: Anti-sigma F factor (146 aa).

This sequence belongs to the anti-sigma-factor family.

The enzyme catalyses L-seryl-[protein] + ATP = O-phospho-L-seryl-[protein] + ADP + H(+). It catalyses the reaction L-threonyl-[protein] + ATP = O-phospho-L-threonyl-[protein] + ADP + H(+). In terms of biological role, binds to sigma F and blocks its ability to form an RNA polymerase holoenzyme (E-sigma F). Phosphorylates SpoIIAA on a serine residue. This phosphorylation may enable SpoIIAA to act as an anti-anti-sigma factor that counteracts SpoIIAB and thus releases sigma F from inhibition. This chain is Anti-sigma F factor, found in Bacillus licheniformis.